A 427-amino-acid chain; its full sequence is Glutamate-1-semialdehyde 2,1-aminomutase (427 aa).

Position 265 is an N6-(pyridoxal phosphate)lysine (Lys265).

This sequence belongs to the class-III pyridoxal-phosphate-dependent aminotransferase family. HemL subfamily. As to quaternary structure, homodimer. Pyridoxal 5'-phosphate is required as a cofactor.

Its subcellular location is the cytoplasm. The catalysed reaction is (S)-4-amino-5-oxopentanoate = 5-aminolevulinate. It participates in porphyrin-containing compound metabolism; protoporphyrin-IX biosynthesis; 5-aminolevulinate from L-glutamyl-tRNA(Glu): step 2/2. The protein is Glutamate-1-semialdehyde 2,1-aminomutase of Pseudomonas fluorescens (strain SBW25).